The following is a 469-amino-acid chain: Diaminopimelate decarboxylase (469 aa).

The disordered stretch occupies residues methionine 1 to serine 23. Lysine 93 is modified (N6-(pyridoxal phosphate)lysine). Pyridoxal 5'-phosphate-binding positions include glycine 279 and glutamate 321–arginine 324. Substrate is bound by residues arginine 324, arginine 361, and tyrosine 365. The active-site Proton donor is the cysteine 392. Substrate is bound by residues glutamate 393 and tyrosine 421. Tyrosine 421 contributes to the pyridoxal 5'-phosphate binding site.

The protein belongs to the Orn/Lys/Arg decarboxylase class-II family. LysA subfamily. As to quaternary structure, homodimer. It depends on pyridoxal 5'-phosphate as a cofactor.

It catalyses the reaction meso-2,6-diaminopimelate + H(+) = L-lysine + CO2. The protein operates within amino-acid biosynthesis; L-lysine biosynthesis via DAP pathway; L-lysine from DL-2,6-diaminopimelate: step 1/1. Specifically catalyzes the decarboxylation of meso-diaminopimelate (meso-DAP) to L-lysine. The polypeptide is Diaminopimelate decarboxylase (Synechocystis sp. (strain ATCC 27184 / PCC 6803 / Kazusa)).